The sequence spans 659 residues: Sodium/nucleoside cotransporter 2 (659 aa).

Positions 1-10 are enriched in basic and acidic residues; sequence MAKSEGRKSA. A disordered region spans residues 1–22; sequence MAKSEGRKSASQDTSENGMENP. Ser46 carries the phosphoserine modification. A run of 14 helical transmembrane segments spans residues 81 to 101, 105 to 124, 149 to 167, 173 to 193, 201 to 221, 234 to 254, 261 to 281, 296 to 315, 337 to 356, 363 to 382, 424 to 444, 455 to 475, 530 to 550, and 568 to 588; these read ILLGLLCLAYAAYLLAACILN, ALALFVITCLVIFILACHFL, KRVFMGAAVVGLILWLALD, EQLISFAGICMFILILFACSK, RTVFWGLGLQFVFGILVIRTE, IQIFLAYTVEGSSFVFGDTLV, QSLPIIIFFGCVMSILYYLGL, TMGTTAAETLAVAGNIFVGM, VMTGGFATIAGTVLGAFISF, LISASVMAAPCALALSKLVY, VAANLIAFLAVLAFINSTLSW, TFQVICSYVLRPMVFMMGVQW, ATFSLCGFANLTSIGITLGGL, and ALFTGACVSFISACMAGILYV.

The protein belongs to the concentrative nucleoside transporter (CNT) (TC 2.A.41) family. As to expression, expressed in liver (in bile canalicular membrane vesicles (CMV) but not in sinusoidal vesicles), jejunum, spleen and heart. Also expressed in brain and skeletal muscle. Not expressed in kidney, muscle and lung.

The protein localises to the membrane. The protein resides in the apicolateral cell membrane. It carries out the reaction adenosine(out) + Na(+)(out) = adenosine(in) + Na(+)(in). The enzyme catalyses inosine(out) + Na(+)(out) = inosine(in) + Na(+)(in). It catalyses the reaction guanosine(out) + Na(+)(out) = guanosine(in) + Na(+)(in). The catalysed reaction is uridine(out) + Na(+)(out) = uridine(in) + Na(+)(in). With respect to regulation, inhibited by formycin B, partially inhibited by purine analog ara-A. In terms of biological role, sodium-dependent and purine-selective. Exhibits the transport characteristics of the nucleoside transport system cif or N1 subtype (N1/cif) (selective for purine nucleosides and uridine). Accepts purine, analogs of purine nucleosides and uridine, and exhibits high affinity for adenosine. May contribute to regulate the transport of organic compounds in testes across the blood-testis-barrier. The chain is Sodium/nucleoside cotransporter 2 (Slc28a2) from Rattus norvegicus (Rat).